A 431-amino-acid chain; its full sequence is Serine hydroxymethyltransferase (431 aa).

(6S)-5,6,7,8-tetrahydrofolate is bound by residues L128 and 132 to 134 (GHL). Residue K237 is modified to N6-(pyridoxal phosphate)lysine. E253 contributes to the (6S)-5,6,7,8-tetrahydrofolate binding site.

The protein belongs to the SHMT family. In terms of assembly, homodimer. It depends on pyridoxal 5'-phosphate as a cofactor.

Its subcellular location is the cytoplasm. The enzyme catalyses (6R)-5,10-methylene-5,6,7,8-tetrahydrofolate + glycine + H2O = (6S)-5,6,7,8-tetrahydrofolate + L-serine. The protein operates within one-carbon metabolism; tetrahydrofolate interconversion. Its pathway is amino-acid biosynthesis; glycine biosynthesis; glycine from L-serine: step 1/1. Catalyzes the reversible interconversion of serine and glycine with tetrahydrofolate (THF) serving as the one-carbon carrier. This reaction serves as the major source of one-carbon groups required for the biosynthesis of purines, thymidylate, methionine, and other important biomolecules. Also exhibits THF-independent aldolase activity toward beta-hydroxyamino acids, producing glycine and aldehydes, via a retro-aldol mechanism. This Cereibacter sphaeroides (strain ATCC 17023 / DSM 158 / JCM 6121 / CCUG 31486 / LMG 2827 / NBRC 12203 / NCIMB 8253 / ATH 2.4.1.) (Rhodobacter sphaeroides) protein is Serine hydroxymethyltransferase.